Reading from the N-terminus, the 393-residue chain is Beta-ureidopropionase (393 aa).

In terms of domain architecture, CN hydrolase spans 72 to 344; sequence VRVGLVQNRI…DGLLVTELNL (273 aa). The active-site Proton acceptor is glutamate 119. Lysine 196 (proton donor) is an active-site residue. Catalysis depends on cysteine 233, which acts as the Nucleophile. The residue at position 378 (serine 378) is a Phosphoserine.

Belongs to the carbon-nitrogen hydrolase superfamily. BUP family. As to quaternary structure, homodimer, homotetramer, homooctamer; can also form higher homooligomers. Post-translationally, the N-terminus is blocked. Detected in liver (at protein level).

It is found in the cytoplasm. The catalysed reaction is 3-(carbamoylamino)propanoate + H2O + 2 H(+) = beta-alanine + NH4(+) + CO2. It catalyses the reaction 3-(carbamoylamino)-2-methylpropanoate + H2O + 2 H(+) = (R)-3-amino-2-methylpropanoate + NH4(+) + CO2. It functions in the pathway amino-acid biosynthesis; beta-alanine biosynthesis. Allosteric enzyme with positive cooperativity toward the substrate N-carbamoyl-beta-alanine at low substrate concentrations (below 12 nM). Displays no cooperativity at substrate levels above 12 nM. Catalyzes a late step in pyrimidine degradation. Converts N-carbamoyl-beta-alanine (3-ureidopropanoate) into beta-alanine, ammonia and carbon dioxide. Likewise, converts N-carbamoyl-beta-aminoisobutyrate (3-ureidoisobutyrate) into beta-aminoisobutyrate, ammonia and carbon dioxide. This Rattus norvegicus (Rat) protein is Beta-ureidopropionase (Upb1).